The sequence spans 397 residues: Sexual differentiation process protein isp7 (397 aa).

The Fe2OG dioxygenase domain maps to 255-353 (PTTSIRLLRY…RYTIPFFLQG (99 aa)).

Belongs to the iron/ascorbate-dependent oxidoreductase family.

The chain is Sexual differentiation process protein isp7 (isp7) from Schizosaccharomyces pombe (strain 972 / ATCC 24843) (Fission yeast).